The chain runs to 174 residues: Shikimate kinase 2 (174 aa).

12-17 is an ATP binding site; the sequence is GCGKTT. Positions 16 and 32 each coordinate Mg(2+). Residues aspartate 34, arginine 58, and glycine 79 each coordinate substrate. The LID domain stretch occupies residues 112 to 126; it reads RAYPEDDQRPSLTGK. Arginine 120 lines the ATP pocket. Arginine 139 provides a ligand contact to substrate. Glutamine 155 contributes to the ATP binding site.

It belongs to the shikimate kinase family. AroL subfamily. Monomer. The cofactor is Mg(2+).

It localises to the cytoplasm. It carries out the reaction shikimate + ATP = 3-phosphoshikimate + ADP + H(+). The protein operates within metabolic intermediate biosynthesis; chorismate biosynthesis; chorismate from D-erythrose 4-phosphate and phosphoenolpyruvate: step 5/7. Functionally, catalyzes the specific phosphorylation of the 3-hydroxyl group of shikimic acid using ATP as a cosubstrate. This chain is Shikimate kinase 2, found in Sodalis glossinidius (strain morsitans).